The chain runs to 153 residues: Histone H2A (153 aa).

Disordered regions lie at residues Met-1–Ser-27 and Lys-131–Ala-153. Low complexity predominate over residues Ala-132–Thr-147. The short motif at Ser-149–Lys-152 is the SPKK motif element.

It belongs to the histone H2A family. The nucleosome is a histone octamer containing two molecules each of H2A, H2B, H3 and H4 assembled in one H3-H4 heterotetramer and two H2A-H2B heterodimers. The octamer wraps approximately 147 bp of DNA.

It localises to the nucleus. It is found in the chromosome. In terms of biological role, core component of nucleosome. Nucleosomes wrap and compact DNA into chromatin, limiting DNA accessibility to the cellular machineries which require DNA as a template. Histones thereby play a central role in transcription regulation, DNA repair, DNA replication and chromosomal stability. DNA accessibility is regulated via a complex set of post-translational modifications of histones, also called histone code, and nucleosome remodeling. This is Histone H2A from Euphorbia esula (Leafy spurge).